The following is a 197-amino-acid chain: Holliday junction branch migration complex subunit RuvA (197 aa).

The interval 1 to 64 is domain I; sequence MIDSIVGTIQ…LSELECYGFL (64 aa). Positions 65 to 143 are domain II; that stretch reads TREERELFLK…KEFKVASTSG (79 aa). Residues 144-152 form a flexible linker region; sequence TEEKTYEKL. Positions 152–197 are domain III; that stretch reads LEEISLALLSLGYEIDEINQVLSSEDFSELSLEDGIKLALKKLSKI.

Belongs to the RuvA family. As to quaternary structure, homotetramer. Forms an RuvA(8)-RuvB(12)-Holliday junction (HJ) complex. HJ DNA is sandwiched between 2 RuvA tetramers; dsDNA enters through RuvA and exits via RuvB. An RuvB hexamer assembles on each DNA strand where it exits the tetramer. Each RuvB hexamer is contacted by two RuvA subunits (via domain III) on 2 adjacent RuvB subunits; this complex drives branch migration. In the full resolvosome a probable DNA-RuvA(4)-RuvB(12)-RuvC(2) complex forms which resolves the HJ.

The protein localises to the cytoplasm. Functionally, the RuvA-RuvB-RuvC complex processes Holliday junction (HJ) DNA during genetic recombination and DNA repair, while the RuvA-RuvB complex plays an important role in the rescue of blocked DNA replication forks via replication fork reversal (RFR). RuvA specifically binds to HJ cruciform DNA, conferring on it an open structure. The RuvB hexamer acts as an ATP-dependent pump, pulling dsDNA into and through the RuvAB complex. HJ branch migration allows RuvC to scan DNA until it finds its consensus sequence, where it cleaves and resolves the cruciform DNA. This is Holliday junction branch migration complex subunit RuvA from Caldicellulosiruptor saccharolyticus (strain ATCC 43494 / DSM 8903 / Tp8T 6331).